Reading from the N-terminus, the 559-residue chain is Fanconi-associated nuclease 1 homolog (559 aa).

The Mn(2+) site is built by E386, D507, E522, and V523. The region spanning 443 to 555 (DGSYRDAIRC…MPVAVCYVRW (113 aa)) is the VRR-NUC domain.

It belongs to the FAN1 family. The cofactor is Mn(2+). Mg(2+) is required as a cofactor.

It catalyses the reaction Hydrolytically removes 5'-nucleotides successively from the 3'-hydroxy termini of 3'-hydroxy-terminated oligonucleotides.. Nuclease required for the repair of DNA interstrand cross-links (ICL). Acts as a 5'-3' exonuclease that anchors at a cut end of DNA and cleaves DNA successively at every third nucleotide, allowing to excise an ICL from one strand through flanking incisions. Also has endonuclease activity toward 5'-flaps. This Pseudomonas aeruginosa (strain ATCC 15692 / DSM 22644 / CIP 104116 / JCM 14847 / LMG 12228 / 1C / PRS 101 / PAO1) protein is Fanconi-associated nuclease 1 homolog.